Consider the following 530-residue polypeptide: Nectin-2 (530 aa).

The first 31 residues, 1 to 31, serve as a signal peptide directing secretion; the sequence is MARAAVLPPSRLSPTLPLLPLLLLLLQETGA. One can recognise an Ig-like V-type domain in the interval 32 to 147; the sequence is QDVRVRVLPE…NGTRRGVTWL (116 aa). At 32 to 351 the chain is on the extracellular side; that stretch reads QDVRVRVLPE…STAGAGATGG (320 aa). C54 and C131 are oxidised to a cystine. Residues N128 and N138 are each glycosylated (N-linked (GlcNAc...) asparagine). Ig-like C2-type domains are found at residues 153 to 247 and 252 to 337; these read PENH…VTLS and PEVS…VILV. 2 disulfides stabilise this stretch: C174-C229 and C274-C320. An N-linked (GlcNAc...) asparagine glycan is attached at N315. The chain crosses the membrane as a helical span at residues 352 to 372; it reads IIGGIIAAIIATAVAGTGILI. Residues 373–530 are Cytoplasmic-facing; it reads CRQQRKEQRL…DFFVSRAMYV (158 aa). The interval 382–407 is disordered; the sequence is LQAADEEEELEGPPSYKPPTPKAKLE. T401 carries the phosphothreonine modification. S424 bears the Phosphoserine mark.

It belongs to the nectin family. As to quaternary structure, can form trans-heterodimers with NECTIN3. Interacts with CD226 or with PVRIG; these interactions are competitive and have a differential functional outcome on T-cell activation, either positive or negative, respectively. Binds with low affinity to TIGIT. As to expression, brain, spinal cord, spleen, kidney, heart and liver.

Its subcellular location is the cell membrane. In terms of biological role, modulator of T-cell signaling. Can be either a costimulator of T-cell function, or a coinhibitor, depending on the receptor it binds to. Upon binding to CD226, stimulates T-cell proliferation and cytokine production, including that of IL2, IL5, IL10, IL13, and IFNG. Upon interaction with PVRIG, inhibits T-cell proliferation. These interactions are competitive. Probable cell adhesion protein. The polypeptide is Nectin-2 (Mus musculus (Mouse)).